The sequence spans 389 residues: MRSTPLHPVARLPEEWSASLAARGERSFTAKQVFQWIHRRGVLDPAAMTNLPARLREHLAAEGLGEVLTPERVHRSEDGTRKLLLRLRDGATIETVLLPSVSGPGSQAQLDADAAAALDDDEDDDAAAEAGAAPRVRVTQCISTQVGCAMGCGFCASGVAGLKRHLGAEEIAGQVLLGRAMLEEGEELRNVVYMGMGEPLHNYEATARSLRLLTHPEGINLSTRRVTVSTSGLVPEIARLGADFGGQIALAISLHAADDETRSALMPINRKHPLDELLAALRAYPLPRRRRITIEYTLVAGQNDDPAEARRLAKLLRGLPVKINLIPMNPIEASSLGPPAQERVAAFQEVLTQAGYSCFVRRRRGDDVSAACGQLVLLGAKPKVRRALG.

Glutamate 94 functions as the Proton acceptor in the catalytic mechanism. Positions 134-367 (PRVRVTQCIS…CFVRRRRGDD (234 aa)) constitute a Radical SAM core domain. A disulfide bridge links cysteine 141 with cysteine 372. 3 residues coordinate [4Fe-4S] cluster: cysteine 148, cysteine 152, and cysteine 155. Residues 197–198 (GE), serine 229, 253–255 (SLH), and asparagine 329 contribute to the S-adenosyl-L-methionine site. Cysteine 372 (S-methylcysteine intermediate) is an active-site residue.

Belongs to the radical SAM superfamily. RlmN family. Requires [4Fe-4S] cluster as cofactor.

Its subcellular location is the cytoplasm. It carries out the reaction adenosine(2503) in 23S rRNA + 2 reduced [2Fe-2S]-[ferredoxin] + 2 S-adenosyl-L-methionine = 2-methyladenosine(2503) in 23S rRNA + 5'-deoxyadenosine + L-methionine + 2 oxidized [2Fe-2S]-[ferredoxin] + S-adenosyl-L-homocysteine. It catalyses the reaction adenosine(37) in tRNA + 2 reduced [2Fe-2S]-[ferredoxin] + 2 S-adenosyl-L-methionine = 2-methyladenosine(37) in tRNA + 5'-deoxyadenosine + L-methionine + 2 oxidized [2Fe-2S]-[ferredoxin] + S-adenosyl-L-homocysteine. Functionally, specifically methylates position 2 of adenine 2503 in 23S rRNA and position 2 of adenine 37 in tRNAs. m2A2503 modification seems to play a crucial role in the proofreading step occurring at the peptidyl transferase center and thus would serve to optimize ribosomal fidelity. This is Dual-specificity RNA methyltransferase RlmN from Sorangium cellulosum (strain So ce56) (Polyangium cellulosum (strain So ce56)).